Reading from the N-terminus, the 298-residue chain is Glycine--tRNA ligase alpha subunit (298 aa).

Belongs to the class-II aminoacyl-tRNA synthetase family. As to quaternary structure, tetramer of two alpha and two beta subunits.

It is found in the cytoplasm. The enzyme catalyses tRNA(Gly) + glycine + ATP = glycyl-tRNA(Gly) + AMP + diphosphate. The protein is Glycine--tRNA ligase alpha subunit of Helicobacter pylori (strain HPAG1).